The primary structure comprises 374 residues: Guanine nucleotide-binding protein subunit alpha-15 (374 aa).

The 334-residue stretch at Glu-41–Leu-374 folds into the G-alpha domain. The tract at residues Lys-44–Thr-57 is G1 motif. GTP contacts are provided by residues Gly-49–Ser-56, Leu-183–Thr-189, Asp-208–Gln-212, Asn-277–Asp-280, and Ala-346. The Mg(2+) site is built by Ser-56 and Thr-189. The tract at residues Asp-181 to Thr-189 is G2 motif. The interval Leu-204–Arg-213 is G3 motif. Residues Ile-273–Asp-280 are G4 motif. The segment at Thr-344–Thr-349 is G5 motif.

Belongs to the G-alpha family. G(q) subfamily. In terms of assembly, g proteins are composed of 3 units; alpha, beta and gamma. The alpha chain contains the guanine nucleotide binding site. As to expression, expressed primarily in hematopoietic cells. Coexpressed with EDG6 at the same relative levels in all tissues examined, with the highest levels in adult spleen and lung.

Its function is as follows. Guanine nucleotide-binding proteins (G proteins) are involved as modulators or transducers in various transmembrane signaling systems. This is Guanine nucleotide-binding protein subunit alpha-15 (Gna15) from Mus musculus (Mouse).